The following is a 222-amino-acid chain: Glutathione transferase GST 23 (222 aa).

The 80-residue stretch at 4 to 83 (KGVKVLGMWA…YIDEVWKGGY (80 aa)) folds into the GST N-terminal domain. Glutathione-binding positions include Ser14, Lys41, Val55, and 67–68 (ES). Residues 89-220 (DPYERAQARF…ANKARREQLL (132 aa)) form the GST C-terminal domain.

It belongs to the GST superfamily.

The enzyme catalyses RX + glutathione = an S-substituted glutathione + a halide anion + H(+). In terms of biological role, involved in multiple disease resistance (MDR). The polypeptide is Glutathione transferase GST 23 (Zea mays (Maize)).